We begin with the raw amino-acid sequence, 223 residues long: Glutathione S-transferase Z2 (223 aa).

The GST N-terminal domain maps to 10-91; that stretch reads AKLKLYSYWR…YLDDKYPEPP (82 aa). Residues 20-21, 20-25, Gln-49, 49-50, 62-63, Val-63, 75-76, Gln-115, and 119-121 contribute to the glutathione site; these read SS, SSCAHR, QS, TV, DS, and NMA. Residues 96–221 form the GST C-terminal domain; that stretch reads DYHKRAVNYQ…VPEKQPDTPS (126 aa).

It belongs to the GST superfamily. Zeta family.

It localises to the cytoplasm. The protein resides in the cytosol. It catalyses the reaction RX + glutathione = an S-substituted glutathione + a halide anion + H(+). In terms of biological role, may be involved in the conjugation of reduced glutathione to a wide number of exogenous and endogenous hydrophobic electrophiles and have a detoxification role against certain herbicides. The sequence is that of Glutathione S-transferase Z2 (GSTZ2) from Arabidopsis thaliana (Mouse-ear cress).